The chain runs to 579 residues: MENGRNWRNRELRQHVKVIDGTVSPTLLLKNATYLNVHTKQWLEANIWIYKDRIIYVGEKLPNQSQETEVYDCEGRFVVPGYIEPHAHPFQLANPEITAMHAAKTGTTTLVNDNLTWYLLTNKKKAFSIIDQFNKLPISMFWWSRYDSQTTLQEENHFINTNDVLDWINHPSVVQGGELTDWPSLLAGDDRLLYWIQETKRNGKPIEGHLPGASLRTLTKMKLLGISADHEAMTGKDVMNRLQLGYMVGLRYSPIRPDLPAILEELLESGLTTFDQLTFTMDGPTPYFMKDGVINTCIQIAIDKGIPLEDAYRMGSFHAAKHLRMDEELGSIAPGRIAHINILQEKENPNPIGVLAKGEWIVKETKEIDIPSIIDWSKYEINEMNIDWNLTEDDLQFSVPVGMDVVNDVIIKPYTIDSDVSFEELNEEKGEQFILLIDRKGKWRVNTIIRGFAPKLGALISSYSASGDIIIIGNSKKDIFIAWNRLKEIKGGIILVNNGEILTEIPLTLGGSLPNEPMEQMIKYDKQLKDTLQKYGFAFYDPVYSLLFLSAFHLPFFRITQKGLLDVKNRDILFPATMR.

Belongs to the metallo-dependent hydrolases superfamily. Adenine deaminase family.

The enzyme catalyses adenine + H2O + H(+) = hypoxanthine + NH4(+). The chain is Putative adenine deaminase OB0751 from Oceanobacillus iheyensis (strain DSM 14371 / CIP 107618 / JCM 11309 / KCTC 3954 / HTE831).